The sequence spans 468 residues: MWLPNLVRFVAVAYLICAGAILTYASGASASSSQSTPATPTHTTPNLTTAHGAGSDNTTNANGTESTHSHETTITCTKSLISVPYYKSVDMNCTTSVGVNYSEYRLEIYLNQRTPFSGTPPGDEENYINHNATKDQTLLLFSTAERKKSRRGGQLGVIPDRLPKRQLFNLPLHTEGGTKFPLTIKSVDWRTAGIYVWSLYAKNGTLVNSTSVTVSTYNAPLLDLSVHPSLKGENYRATCVVASYFPHSSVKLRWYKNAREVDFTKYVTNASSVWVDGLITRISTVSIPVDPEEEYTPSLRCSIDWYRDEVSFARIAKAGTPSVFVAPTVSVSVEDGDAVCTAKCVPSTGVFVSWSVNDHLPGVPSQDMTTGVCPSHSGLVNMQSRRPLSEENGEREYSCIIEGYPDGLPMFSDTVVYDASPIVEDRPVLTSIIAVTCGAAALALVVLITAVCFYCSKPSQAPYKKSDF.

An N-terminal signal peptide occupies residues 1 to 30 (MWLPNLVRFVAVAYLICAGAILTYASGASA). Low complexity predominate over residues 31-50 (SSSQSTPATPTHTTPNLTTA). Residues 31–73 (SSSQSTPATPTHTTPNLTTAHGAGSDNTTNANGTESTHSHETT) form a disordered region. Over 31-431 (SSSQSTPATP…IVEDRPVLTS (401 aa)) the chain is Virion surface. Asn46, Asn57, Asn62, Asn92, Asn100, Asn131, Asn203, Asn208, and Asn269 each carry an N-linked (GlcNAc...) asparagine; by host glycan. A disulfide bridge links Cys76 with Cys93. 2 Ig-like domains span residues 220–311 (PLLD…DEVS) and 321–416 (PSVF…DTVV). Cystine bridges form between Cys239–Cys301, Cys340–Cys399, and Cys344–Cys373. A helical membrane pass occupies residues 432–451 (IIAVTCGAAALALVVLITAV). At 452-468 (CFYCSKPSQAPYKKSDF) the chain is on the cytoplasmic side.

This sequence belongs to the herpesviridae glycoprotein C family. As to quaternary structure, interacts with host complement component C3; this interaction inhibits host immune response by disregulating complement cascade.

Its subcellular location is the virion membrane. Essential for the initial attachment to heparan sulfate moieties of the host cell surface proteoglycans. Also plays a role in host immune evasion by inhibiting the host complement cascade activation. The polypeptide is Envelope glycoprotein C (gC) (Equus caballus (Horse)).